The primary structure comprises 331 residues: Beta-ketoacyl-[acyl-carrier-protein] synthase III (331 aa).

Residues C115 and H255 contribute to the active site. An ACP-binding region spans residues 256–260 (QANFR). The active site involves N285.

Belongs to the thiolase-like superfamily. FabH family. As to quaternary structure, homodimer.

The protein resides in the cytoplasm. It catalyses the reaction malonyl-[ACP] + acetyl-CoA + H(+) = 3-oxobutanoyl-[ACP] + CO2 + CoA. The protein operates within lipid metabolism; fatty acid biosynthesis. Its function is as follows. Catalyzes the condensation reaction of fatty acid synthesis by the addition to an acyl acceptor of two carbons from malonyl-ACP. Catalyzes the first condensation reaction which initiates fatty acid synthesis and may therefore play a role in governing the total rate of fatty acid production. Possesses both acetoacetyl-ACP synthase and acetyl transacylase activities. Its substrate specificity determines the biosynthesis of branched-chain and/or straight-chain of fatty acids. The chain is Beta-ketoacyl-[acyl-carrier-protein] synthase III from Helicobacter pylori (strain ATCC 700392 / 26695) (Campylobacter pylori).